A 117-amino-acid polypeptide reads, in one-letter code: Small ribosomal subunit protein uS13 (117 aa).

A disordered region spans residues 94-117 (SLPLRGQRTKTNARTRKGPRRLIK).

The protein belongs to the universal ribosomal protein uS13 family. In terms of assembly, part of the 30S ribosomal subunit. Forms a loose heterodimer with protein S19. Forms two bridges to the 50S subunit in the 70S ribosome.

Located at the top of the head of the 30S subunit, it contacts several helices of the 16S rRNA. In the 70S ribosome it contacts the 23S rRNA (bridge B1a) and protein L5 of the 50S subunit (bridge B1b), connecting the 2 subunits; these bridges are implicated in subunit movement. Contacts the tRNAs in the A and P-sites. This chain is Small ribosomal subunit protein uS13, found in Vesicomyosocius okutanii subsp. Calyptogena okutanii (strain HA).